A 478-amino-acid polypeptide reads, in one-letter code: MAKPACVFLPPAFLEATRAIMPADLSMDDFIAACQRPLRRSLRVNTLKISVTDFLTLVQDYDWRLEPIPWCAEGFWIERGDEELRLGSAAEHLSGLFYIQEASSMLPVSALFAGAEAPSRVLDVAAAPGSKTTQIAALMNNQGGIVANEYSASRVKVLHANISRCGVKNVALTHFDGRVFGAALPESFDAILLDAPCSGEGVVRKDPDAMSNWSPESVTAIADTQRELIDSAFHALAPGGVMVYSTCTLNAQENQQIVNGLLATYGDAVSIEPLGDLFPGAKQALTAEGFLHVFPQIYDSEGFFVARLRKHHSVPPLAKPSYKLGKFPFTPLSGKDSAEIAQAAAASGLAWDKTSRLWARDKEIWLFPAELEALVNKIRFSRIGLKLAERFTKGYRWQHEAVIALAVADGKQRFELDATLAQEWFHGRDLYPEPPPQTDECIVTYQQQPLGIAKRIGSRIKNNLPRELVRDGVLDFHQ.

Residues 125 to 131 (AAAPGSK), Glu149, Asp176, and Asp194 each bind S-adenosyl-L-methionine. The active-site Nucleophile is Cys247.

This sequence belongs to the class I-like SAM-binding methyltransferase superfamily. RsmB/NOP family.

Its subcellular location is the cytoplasm. It catalyses the reaction cytidine(1407) in 16S rRNA + S-adenosyl-L-methionine = 5-methylcytidine(1407) in 16S rRNA + S-adenosyl-L-homocysteine + H(+). Functionally, specifically methylates the cytosine at position 1407 (m5C1407) of 16S rRNA. The polypeptide is Ribosomal RNA small subunit methyltransferase F (Serratia proteamaculans (strain 568)).